A 96-amino-acid polypeptide reads, in one-letter code: Guanine nucleotide-binding protein alpha-9 subunit (96 aa).

The 95-residue stretch at 2-96 folds into the G-alpha domain; the sequence is YFHSTAIILF…ISASLKMVGV (95 aa). The tract at residues 9–16 is G1 motif; the sequence is ILFLNKID. GTP is bound by residues 13 to 16 and alanine 69; that span reads NKID. A G2 motif region spans residues 67–72; sequence TSATDT.

The protein belongs to the G-alpha family. G proteins are composed of 3 units; alpha, beta and gamma. The alpha chain contains the guanine nucleotide binding site. As to expression, expressed in ASJ neurons.

Functionally, guanine nucleotide-binding proteins (G proteins) are involved as modulators or transducers in various transmembrane signaling systems. Plays a role in innate immunity and maintaining survival in response to metabolites of E.coli. This might be by regulating the expression and signaling of genes such as lys-8, ins-7 and daf-28. Has a role in lifespan to promote longevity. In Caenorhabditis elegans, this protein is Guanine nucleotide-binding protein alpha-9 subunit.